We begin with the raw amino-acid sequence, 298 residues long: H-2 class I histocompatibility antigen, alpha chain (298 aa).

The Extracellular segment spans residues 1 to 244 (RYEPRARWIE…EPPSSTKTNT (244 aa)). A glycan (N-linked (GlcNAc...) asparagine) is linked at Asn43. Residues Cys58 and Cys121 are joined by a disulfide bond. Asn133 carries an N-linked (GlcNAc...) asparagine glycan. Positions 142–230 (PKAHVTHHRR…EGLPEPLTLR (89 aa)) constitute an Ig-like C1-type domain. A disulfide bond links Cys160 and Cys216. Residues 245–265 (VIIAVPVVLGAVVILGAVMAF) traverse the membrane as a helical segment. Residues 266–298 (VMKRRRNTGGKGGDYALAPVSQSSDMSLPDCKV) lie on the Cytoplasmic side of the membrane. Residues 277-298 (GGDYALAPVSQSSDMSLPDCKV) form a disordered region. Phosphoserine occurs at positions 289 and 292.

The protein belongs to the MHC class I family. As to quaternary structure, heterodimer of an alpha chain and a beta chain (beta-2-microglobulin).

It localises to the membrane. Its function is as follows. Involved in the presentation of foreign antigens to the immune system. The sequence is that of H-2 class I histocompatibility antigen, alpha chain (H2-D1) from Mus musculus (Mouse).